The chain runs to 168 residues: MNYYEVGKIVNTHGIKGELKIISKTDFPEDRFKPGNILYIRDNGKINSYEIKSHRTHKQFEMITFKGLENINLVENLKGKILEISEEQQENLSDGNYYHHQIIGLDVFSEDNNYIGVIKEIMSPGANDVWVVKRKGSSDLLLPAIKDVIKKIDLEQNKVIIELLDGLD.

Positions 94–167 (DGNYYHHQII…KVIIELLDGL (74 aa)) constitute a PRC barrel domain.

The protein belongs to the RimM family. As to quaternary structure, binds ribosomal protein uS19.

Its subcellular location is the cytoplasm. In terms of biological role, an accessory protein needed during the final step in the assembly of 30S ribosomal subunit, possibly for assembly of the head region. Essential for efficient processing of 16S rRNA. May be needed both before and after RbfA during the maturation of 16S rRNA. It has affinity for free ribosomal 30S subunits but not for 70S ribosomes. This Ligilactobacillus salivarius (strain UCC118) (Lactobacillus salivarius) protein is Ribosome maturation factor RimM.